A 286-amino-acid chain; its full sequence is Shikimate dehydrogenase (NADP(+)) (286 aa).

Residues 19–21 (SVS) and Thr-66 each bind shikimate. The active-site Proton acceptor is the Lys-70. Residues Asn-91 and Asp-106 each contribute to the shikimate site. NADP(+) contacts are provided by residues 130 to 134 (GAGGS) and Ala-225. Tyr-227 is a shikimate binding site. An NADP(+)-binding site is contributed by Gly-248.

The protein belongs to the shikimate dehydrogenase family. In terms of assembly, homodimer.

The catalysed reaction is shikimate + NADP(+) = 3-dehydroshikimate + NADPH + H(+). It participates in metabolic intermediate biosynthesis; chorismate biosynthesis; chorismate from D-erythrose 4-phosphate and phosphoenolpyruvate: step 4/7. Involved in the biosynthesis of the chorismate, which leads to the biosynthesis of aromatic amino acids. Catalyzes the reversible NADPH linked reduction of 3-dehydroshikimate (DHSA) to yield shikimate (SA). This Dehalococcoides mccartyi (strain ATCC BAA-2266 / KCTC 15142 / 195) (Dehalococcoides ethenogenes (strain 195)) protein is Shikimate dehydrogenase (NADP(+)).